The sequence spans 366 residues: D-alanine--D-alanine ligase (366 aa).

Residues 145–348 form the ATP-grasp domain; the sequence is KRLLDDAGLA…YQSLITKLIE (204 aa). An ATP-binding site is contributed by 175–230; sequence VEQLGLPLFIKPANLGSSVGISKVNNEAEFNAALSMAFEYDLKVIIESAIVGREIE. Residues aspartate 302, glutamate 315, and asparagine 317 each coordinate Mg(2+).

This sequence belongs to the D-alanine--D-alanine ligase family. Mg(2+) serves as cofactor. Mn(2+) is required as a cofactor.

It localises to the cytoplasm. The enzyme catalyses 2 D-alanine + ATP = D-alanyl-D-alanine + ADP + phosphate + H(+). It participates in cell wall biogenesis; peptidoglycan biosynthesis. Cell wall formation. This Proteus mirabilis (strain HI4320) protein is D-alanine--D-alanine ligase.